We begin with the raw amino-acid sequence, 395 residues long: Bifunctional enzyme IspD/IspF (395 aa).

The tract at residues Met1–Pro237 is 2-C-methyl-D-erythritol 4-phosphate cytidylyltransferase. Positions Cys238–Pro395 are 2-C-methyl-D-erythritol 2,4-cyclodiphosphate synthase. A divalent metal cation-binding residues include Asp244 and His246. Residues Asp244–His246 and His270–Ser271 each bind 4-CDP-2-C-methyl-D-erythritol 2-phosphate. His278 is an a divalent metal cation binding site. 4-CDP-2-C-methyl-D-erythritol 2-phosphate is bound by residues Asp292–Gly294, Phe297–Asp301, Thr368–Glu371, and Phe375.

This sequence in the N-terminal section; belongs to the IspD/TarI cytidylyltransferase family. IspD subfamily. It in the C-terminal section; belongs to the IspF family. The cofactor is a divalent metal cation.

The catalysed reaction is 2-C-methyl-D-erythritol 4-phosphate + CTP + H(+) = 4-CDP-2-C-methyl-D-erythritol + diphosphate. The enzyme catalyses 4-CDP-2-C-methyl-D-erythritol 2-phosphate = 2-C-methyl-D-erythritol 2,4-cyclic diphosphate + CMP. Its pathway is isoprenoid biosynthesis; isopentenyl diphosphate biosynthesis via DXP pathway; isopentenyl diphosphate from 1-deoxy-D-xylulose 5-phosphate: step 2/6. It functions in the pathway isoprenoid biosynthesis; isopentenyl diphosphate biosynthesis via DXP pathway; isopentenyl diphosphate from 1-deoxy-D-xylulose 5-phosphate: step 4/6. In terms of biological role, bifunctional enzyme that catalyzes the formation of 4-diphosphocytidyl-2-C-methyl-D-erythritol from CTP and 2-C-methyl-D-erythritol 4-phosphate (MEP) (IspD), and catalyzes the conversion of 4-diphosphocytidyl-2-C-methyl-D-erythritol 2-phosphate (CDP-ME2P) to 2-C-methyl-D-erythritol 2,4-cyclodiphosphate (ME-CPP) with a corresponding release of cytidine 5-monophosphate (CMP) (IspF). The chain is Bifunctional enzyme IspD/IspF from Nitratidesulfovibrio vulgaris (strain ATCC 29579 / DSM 644 / CCUG 34227 / NCIMB 8303 / VKM B-1760 / Hildenborough) (Desulfovibrio vulgaris).